The following is a 477-amino-acid chain: Protein RdxB (477 aa).

Over 1–29 (MTSPDTQTSSLYAKREPVFPKRVSGKFRS) the chain is Cytoplasmic. Residues 30-50 (LKWWIMGVTLGIYYIAPWLRW) traverse the membrane as a helical segment. The Periplasmic segment spans residues 51–81 (DRGPNLPDQAILVDLANRRFFFFMIEIWPHE). The chain crosses the membrane as a helical span at residues 82–102 (FYFVAGLLIMAGLGLFLFTSA). At 103–154 (AGRVWCGYACPQTVWTDLFILVERWVEGDRNARIRLLRQRWDLEKTRKYLTK) the chain is on the cytoplasmic side. Residues 155–175 (WTLWLLIGLATGGAWVFYFTD) form a helical membrane-spanning segment. Residues 176-189 (APTLLVDLLTGNAH) are Periplasmic-facing. The chain crosses the membrane as a helical span at residues 190-210 (PVAYITMATLTATTFAFGGFA). Residues 211-338 (REQICIYACP…SAWRHVFRLR (128 aa)) are Cytoplasmic-facing. The 4Fe-4S ferredoxin-type domain maps to 253–281 (EPLSPDQGDCIDCMACVNVCPMGIDIRDG). Residues C262, C265, C268, C272, C286, C289, C292, and C296 each contribute to the [4Fe-4S] cluster site. The helical transmembrane segment at 339–359 (TLIYTALWSGVGLALIVALFL) threads the bilayer. Residues 360–477 (RSPIDINVTP…HDTIFNGRGN (118 aa)) are Periplasmic-facing.

It depends on [4Fe-4S] cluster as a cofactor.

It is found in the cell membrane. Its function is as follows. Involved in a membrane generated redox signal; required to maintain repression of photosynthesis gene expression in the presence of oxygen. This chain is Protein RdxB (rdxB), found in Cereibacter sphaeroides (strain ATCC 17023 / DSM 158 / JCM 6121 / CCUG 31486 / LMG 2827 / NBRC 12203 / NCIMB 8253 / ATH 2.4.1.) (Rhodobacter sphaeroides).